The following is a 178-amino-acid chain: Large ribosomal subunit protein uL6 (178 aa).

It belongs to the universal ribosomal protein uL6 family. Part of the 50S ribosomal subunit.

Its function is as follows. This protein binds to the 23S rRNA, and is important in its secondary structure. It is located near the subunit interface in the base of the L7/L12 stalk, and near the tRNA binding site of the peptidyltransferase center. The chain is Large ribosomal subunit protein uL6 from Levilactobacillus brevis (strain ATCC 367 / BCRC 12310 / CIP 105137 / JCM 1170 / LMG 11437 / NCIMB 947 / NCTC 947) (Lactobacillus brevis).